The following is a 70-amino-acid chain: Sec-independent protein translocase protein TatA (70 aa).

A helical transmembrane segment spans residues 1–21 (MGIGVWELLLLFLIVLVVFGT). The segment at 42–70 (MSENEDKPSEGGARTLEGEVVDKKEKDKV) is disordered. The segment covering 57 to 70 (LEGEVVDKKEKDKV) has biased composition (basic and acidic residues).

Belongs to the TatA/E family. The Tat system comprises two distinct complexes: a TatABC complex, containing multiple copies of TatA, TatB and TatC subunits, and a separate TatA complex, containing only TatA subunits. Substrates initially bind to the TatABC complex, which probably triggers association of the separate TatA complex to form the active translocon.

It localises to the cell inner membrane. Its function is as follows. Part of the twin-arginine translocation (Tat) system that transports large folded proteins containing a characteristic twin-arginine motif in their signal peptide across membranes. TatA could form the protein-conducting channel of the Tat system. The sequence is that of Sec-independent protein translocase protein TatA from Methylococcus capsulatus (strain ATCC 33009 / NCIMB 11132 / Bath).